We begin with the raw amino-acid sequence, 497 residues long: Glycerol kinase (497 aa).

An ADP-binding site is contributed by Thr12. Residues Thr12, Thr13, and Ser14 each contribute to the ATP site. Residue Thr12 participates in sn-glycerol 3-phosphate binding. Residue Arg16 coordinates ADP. Sn-glycerol 3-phosphate is bound by residues Arg82, Glu83, Tyr133, and Asp243. Residues Arg82, Glu83, Tyr133, Asp243, and Gln244 each contribute to the glycerol site. ADP is bound by residues Thr265 and Gly308. 4 residues coordinate ATP: Thr265, Gly308, Gln312, and Gly409. Gly409 is a binding site for ADP.

It belongs to the FGGY kinase family.

It catalyses the reaction glycerol + ATP = sn-glycerol 3-phosphate + ADP + H(+). Its pathway is polyol metabolism; glycerol degradation via glycerol kinase pathway; sn-glycerol 3-phosphate from glycerol: step 1/1. Inhibited by fructose 1,6-bisphosphate (FBP). Functionally, key enzyme in the regulation of glycerol uptake and metabolism. Catalyzes the phosphorylation of glycerol to yield sn-glycerol 3-phosphate. This chain is Glycerol kinase, found in Dichelobacter nodosus (strain VCS1703A).